The primary structure comprises 90 residues: Probable Fe(2+)-trafficking protein (90 aa).

It belongs to the Fe(2+)-trafficking protein family.

In terms of biological role, could be a mediator in iron transactions between iron acquisition and iron-requiring processes, such as synthesis and/or repair of Fe-S clusters in biosynthetic enzymes. This Pseudomonas fluorescens (strain Pf0-1) protein is Probable Fe(2+)-trafficking protein.